A 277-amino-acid polypeptide reads, in one-letter code: Type IV methyl-directed restriction enzyme EcoKMcrA (277 aa).

One can recognise an HNH domain in the interval 207 to 257 (CENCGKNAPFYLNDGNPYLEVHHVIPLSSGGADTTDNCVALCPNCHRELHY).

In terms of biological role, restriction of 5-methyl and 5-hydroxymethylcytosines at the specific DNA sequence 5'-C(me)CGG-3'. The polypeptide is Type IV methyl-directed restriction enzyme EcoKMcrA (Escherichia coli (strain K12)).